The following is a 336-amino-acid chain: Ketol-acid reductoisomerase (NADP(+)) (336 aa).

The KARI N-terminal Rossmann domain occupies 3–183 (AKMYYDRDVD…GCTKAGVLET (181 aa)). NADP(+)-binding positions include 26 to 29 (YGSQ), Arg49, Ser52, Ser54, and 84 to 87 (DEQQ). Residue His109 is part of the active site. Residue Gly135 participates in NADP(+) binding. Residues 184–329 (TFKEETETDL…KELRDQMPFI (146 aa)) enclose the KARI C-terminal knotted domain. Mg(2+)-binding residues include Asp192, Glu196, Glu228, and Glu232. Substrate is bound at residue Ser253.

This sequence belongs to the ketol-acid reductoisomerase family. Requires Mg(2+) as cofactor.

The catalysed reaction is (2R)-2,3-dihydroxy-3-methylbutanoate + NADP(+) = (2S)-2-acetolactate + NADPH + H(+). It carries out the reaction (2R,3R)-2,3-dihydroxy-3-methylpentanoate + NADP(+) = (S)-2-ethyl-2-hydroxy-3-oxobutanoate + NADPH + H(+). It participates in amino-acid biosynthesis; L-isoleucine biosynthesis; L-isoleucine from 2-oxobutanoate: step 2/4. The protein operates within amino-acid biosynthesis; L-valine biosynthesis; L-valine from pyruvate: step 2/4. Its function is as follows. Involved in the biosynthesis of branched-chain amino acids (BCAA). Catalyzes an alkyl-migration followed by a ketol-acid reduction of (S)-2-acetolactate (S2AL) to yield (R)-2,3-dihydroxy-isovalerate. In the isomerase reaction, S2AL is rearranged via a Mg-dependent methyl migration to produce 3-hydroxy-3-methyl-2-ketobutyrate (HMKB). In the reductase reaction, this 2-ketoacid undergoes a metal-dependent reduction by NADPH to yield (R)-2,3-dihydroxy-isovalerate. This chain is Ketol-acid reductoisomerase (NADP(+)), found in Deinococcus radiodurans (strain ATCC 13939 / DSM 20539 / JCM 16871 / CCUG 27074 / LMG 4051 / NBRC 15346 / NCIMB 9279 / VKM B-1422 / R1).